We begin with the raw amino-acid sequence, 260 residues long: uncharacterized protein (260 aa).

This sequence belongs to the MG032/MG096/MG288 family.

This is an uncharacterized protein from Mycoplasma pneumoniae (strain ATCC 29342 / M129 / Subtype 1) (Mycoplasmoides pneumoniae).